A 248-amino-acid polypeptide reads, in one-letter code: Short-chain dehydrogenase/reductase iacG (248 aa).

Residues isoleucine 14, asparagine 35, lysine 41, aspartate 58, arginine 120, and valine 187 each contribute to the NADP(+) site.

Belongs to the short-chain dehydrogenases/reductases (SDR) family.

The protein operates within secondary metabolite biosynthesis. Short-chain dehydrogenase/reductase; part of the gene cluster that mediates the biosynthesis of iso-A82775C, a enylepoxycyclohexane and biosynthetic precursor of the chloropestolide anticancer natural products. Within the cluster, the prenyltransferase iacE prenylates siccayne to generate pestalodiol E, using dimethylallyl diphosphate (DMAPP) as cosubstrate. The probable oxidoreductase iacF is then involved in the epoxidation of pestalodiol F to pestalodiol F, which is further converted to pestalofone A by the short-chain dehydrogenase/reductase iacG. Iso-A82775C is subsequently generated from pestalofone A by the short-chain dehydrogenase/reductase iacC. Iso-A82775C is further condensed with maldoxin via a Diels-Alder reaction to produce the anticancer natural products chloropestolides A to E. The sequence is that of Short-chain dehydrogenase/reductase iacG from Pestalotiopsis fici (strain W106-1 / CGMCC3.15140).